The sequence spans 519 residues: Cytochrome P450 monooxygenase apdE (519 aa).

Residues 27–47 traverse the membrane as a helical segment; it reads FVFFAFVVYSCFTIAVGWVVY. N-linked (GlcNAc...) asparagine glycosylation is found at Asn-327 and Asn-379. Residue Cys-466 participates in heme binding. Asn-508 carries N-linked (GlcNAc...) asparagine glycosylation.

The protein belongs to the cytochrome P450 family. Heme serves as cofactor.

The protein resides in the membrane. Its pathway is secondary metabolite biosynthesis. In terms of biological role, cytochrome P450 monooxygenase; part of the gene cluster that mediates the biosynthesis of aspyridones. The polyketide-amino acid backbone preaspyridone A is first assembled by the PKS-NRPS hybrid apdA. The assembly of preaspyridone A is initiated by loading of malonyl-CoA onto apdA, followed by decarboxylation to yield the acetyl starter unit. The growing polyketide chain then elongates into a tetraketide. The adpA PKS module catalyzes three Claisen condensations, as well as beta-keto processing and methylation. Alpha-methylation step during polyketide synthesis is a prerequisite and a key checkpoint for chain transfer between PKS and NRPS modules. The downstream NRPS module contains the condensation (C), adenylation (A), and thiolation (T) domains and catalyzes the incorporation of tyrosine via the formation of the L-tyrosinyl-thioester and the amide linkage between L-tyrosinyl-thioester and the tetraketide. The bimodular assembly line is terminated with a reductase (R) domain that facilitates formation and release of the tetramic acid product. Because apdA lacks a designated enoylreductase (ER) domain, the required activity is provided the enoyl reductase apdC. ApdC appears to operate with different stereoselectivity in different PKS cycle. Combined with apdC, apdA is proposed to synthesize preaspyridone A via about 20 enzymatic steps. A number of oxidative steps performed successively by the cytochrome P450 monooxygenases apdE and apdB are required for the conversion of preaspyridone A to aspyridone A. The cytochrome P450 monooxygenase apdE is responsible for the oxidative dephenylation of preaspyridone A. Finally, the predicted FAD-dependent monooxygenase apdD and the acyl-CoA dehydrogenase apdG may be involved in the transformation of aspyridone A into aspyridone B. The sequence is that of Cytochrome P450 monooxygenase apdE from Emericella nidulans (strain FGSC A4 / ATCC 38163 / CBS 112.46 / NRRL 194 / M139) (Aspergillus nidulans).